The sequence spans 332 residues: DNA-directed RNA polymerase subunit alpha (332 aa).

The interval 1–234 (MTVTISQVLR…DQLSVFGDFT (234 aa)) is alpha N-terminal domain (alpha-NTD). An alpha C-terminal domain (alpha-CTD) region spans residues 248–332 (VDPVLLRPID…PGVSQYGMLG (85 aa)).

The protein belongs to the RNA polymerase alpha chain family. As to quaternary structure, homodimer. The RNAP catalytic core consists of 2 alpha, 1 beta, 1 beta' and 1 omega subunit. When a sigma factor is associated with the core the holoenzyme is formed, which can initiate transcription.

It carries out the reaction RNA(n) + a ribonucleoside 5'-triphosphate = RNA(n+1) + diphosphate. In terms of biological role, DNA-dependent RNA polymerase catalyzes the transcription of DNA into RNA using the four ribonucleoside triphosphates as substrates. This is DNA-directed RNA polymerase subunit alpha from Xylella fastidiosa (strain M12).